A 326-amino-acid polypeptide reads, in one-letter code: Fos-related antigen 2 (326 aa).

N-acetylmethionine is present on methionine 1. Residues 1-39 (MYQDYPGNFDTSSRGSSGSPAHAESYSSGGGGQQKFRVD) are disordered. Polar residues predominate over residues 9–19 (FDTSSRGSSGS). Lysine 35 participates in a covalent cross-link: Glycyl lysine isopeptide (Lys-Gly) (interchain with G-Cter in SUMO2). An N6-acetyllysine; alternate modification is found at lysine 104. Lysine 104 participates in a covalent cross-link: Glycyl lysine isopeptide (Lys-Gly) (interchain with G-Cter in SUMO2); alternate. 3 disordered regions span residues 111-131 (GRRR…RIRR), 193-244 (ISPE…QRSV), and 289-326 (EQES…LLAL). At serine 120 the chain carries Phosphoserine. The bZIP domain maps to 124–187 (EEKRRIRRER…EKLEFMLVAH (64 aa)). Residues 126–128 (KRR) are basic motif. The leucine-zipper stretch occupies residues 129–136 (IRRERNKL). Residue serine 200 is modified to Phosphoserine. Positions 201 to 211 (PPTSGLQSLRG) are enriched in polar residues. A Glycyl lysine isopeptide (Lys-Gly) (interchain with G-Cter in SUMO2); alternate cross-link involves residue lysine 222. A Glycyl lysine isopeptide (Lys-Gly) (interchain with G-Cter in SUMO1); alternate cross-link involves residue lysine 222. The residue at position 230 (serine 230) is a Phosphoserine. A Glycyl lysine isopeptide (Lys-Gly) (interchain with G-Cter in SUMO2) cross-link involves residue lysine 239. Phosphoserine is present on residues serine 308 and serine 320. Residues 308 to 320 (SSSGDQSSDSLNS) show a composition bias toward low complexity.

The protein belongs to the bZIP family. Fos subfamily. In terms of assembly, heterodimer. Interacts with the BAF multiprotein chromatin-remodeling complex subunits SMARCB1 and SMARCD1. Interacts with ARID1A and JUN. Expressed in the brain cortex. Expressed at night in pineal gland (at protein level). Also expressed in osteoblasts (at protein level).

Its subcellular location is the nucleus. Its function is as follows. Controls osteoclast survival and size. As a dimer with JUN, activates LIF transcription. Activates CEBPB transcription in PGE2-activated osteoblasts. This chain is Fos-related antigen 2 (Fosl2), found in Rattus norvegicus (Rat).